A 474-amino-acid polypeptide reads, in one-letter code: Hepatocyte nuclear factor 4-alpha (474 aa).

The segment at residues 57–132 is a DNA-binding region (nuclear receptor); it reads SALCAICGDR…AGMKKEAVQN (76 aa). 2 consecutive NR C4-type zinc fingers follow at residues 60-80 and 96-120; these read CAIC…CDGC and CRFS…LKKC. Phosphoserine occurs at positions 142 and 143. Tyr-144 carries the phosphotyrosine modification. One can recognise an NR LBD domain in the interval 147 to 377; it reads SSLPSINALL…NLLQEMLLGG (231 aa). A Phosphothreonine modification is found at Thr-166. Phosphoserine is present on Ser-167. Glycyl lysine isopeptide (Lys-Gly) (interchain with G-Cter in ubiquitin) cross-links involve residues Lys-234 and Lys-307. Ser-313 carries the post-translational modification Phosphoserine; by AMPK. The short motif at 368–376 is the 9aaTAD element; sequence NLLQEMLLG. Positions 419 to 447 are disordered; it reads EWPRPRGQAATPETPQPSPPGGSGSEPYK. Phosphothreonine occurs at positions 429 and 432. Position 436 is a phosphoserine (Ser-436). Lys-458 carries the N6-acetyllysine modification.

It belongs to the nuclear hormone receptor family. NR2 subfamily. As to quaternary structure, homodimerization is required for HNF4-alpha to bind to its recognition site. Interacts with CLOCK, BMAL1, CRY1, CRY2, PER1 and PER2. Interacts with NR0B2/SHP; the resulting heterodimer is transcriptionally inactive. Interacts with DDX3X; this interaction disrupts the interaction between HNF4 and NR0B2 that forms inactive heterodimers and enhances the formation of active HNF4 homodimers. Post-translationally, phosphorylated on tyrosine residue(s); phosphorylation is important for its DNA-binding activity. Phosphorylation may directly or indirectly play a regulatory role in the subnuclear distribution. Phosphorylation at Ser-313 by AMPK reduces the ability to form homodimers and bind DNA. Acetylation at Lys-458 lowers transcriptional activation by about two-fold.

It localises to the nucleus. In terms of biological role, transcriptional regulator which controls the expression of hepatic genes during the transition of endodermal cells to hepatic progenitor cells, facilitating the recruitment of RNA pol II to the promoters of target genes. Activates the transcription of CYP2C38. Represses the CLOCK-BMAL1 transcriptional activity and is essential for circadian rhythm maintenance and period regulation in the liver and colon cells. This chain is Hepatocyte nuclear factor 4-alpha (HNF4A), found in Homo sapiens (Human).